Consider the following 187-residue polypeptide: Adenylate kinase (187 aa).

10–15 (GSGKGT) contacts ATP. The interval 30–59 (STGDLLRSEVVAGTPLGLQAKQVMAQGDLV) is NMP. AMP is bound by residues Thr31, Arg36, 57–59 (DLV), 85–88 (GYPR), and Gln92. The segment at 126–136 (GRAQAEGREDD) is LID. Residue Arg127 participates in ATP binding. Residues Arg133 and Arg144 each contribute to the AMP site. Gly172 serves as a coordination point for ATP.

The protein belongs to the adenylate kinase family. Monomer.

It is found in the cytoplasm. The enzyme catalyses AMP + ATP = 2 ADP. It functions in the pathway purine metabolism; AMP biosynthesis via salvage pathway; AMP from ADP: step 1/1. Its function is as follows. Catalyzes the reversible transfer of the terminal phosphate group between ATP and AMP. Plays an important role in cellular energy homeostasis and in adenine nucleotide metabolism. This Xylella fastidiosa (strain M23) protein is Adenylate kinase.